We begin with the raw amino-acid sequence, 540 residues long: uncharacterized protein (540 aa).

The N-terminal stretch at 1–20 is a signal peptide; that stretch reads MSVSYRGPRWSSFVHVSQHS.

The protein belongs to the TP096X family.

This is an uncharacterized protein from Treponema pallidum (strain Nichols).